The sequence spans 151 residues: 3-hydroxyacyl-[acyl-carrier-protein] dehydratase FabZ (151 aa).

Residue H57 is part of the active site.

It belongs to the thioester dehydratase family. FabZ subfamily.

It is found in the cytoplasm. The catalysed reaction is a (3R)-hydroxyacyl-[ACP] = a (2E)-enoyl-[ACP] + H2O. Involved in unsaturated fatty acids biosynthesis. Catalyzes the dehydration of short chain beta-hydroxyacyl-ACPs and long chain saturated and unsaturated beta-hydroxyacyl-ACPs. In Synechococcus sp. (strain CC9605), this protein is 3-hydroxyacyl-[acyl-carrier-protein] dehydratase FabZ.